Reading from the N-terminus, the 23-residue chain is Protein DCL, chloroplastic (23 aa).

The protein resides in the plastid. It localises to the chloroplast. Its function is as follows. Has a function in the early stage of chloroplast development and palisade cell morphogenesis. The polypeptide is Protein DCL, chloroplastic (Pseudotsuga menziesii (Douglas-fir)).